Consider the following 457-residue polypeptide: Siroheme synthase (457 aa).

Residues M1–T204 form a precorrin-2 dehydrogenase /sirohydrochlorin ferrochelatase region. NAD(+) contacts are provided by residues D22–V23 and L43–T44. At S128 the chain carries Phosphoserine. The tract at residues G216–H457 is uroporphyrinogen-III C-methyltransferase. P225 contributes to the S-adenosyl-L-methionine binding site. The active-site Proton acceptor is the D248. K270 serves as the catalytic Proton donor. S-adenosyl-L-methionine-binding positions include G301–D303, I306, T331–A332, M382, and G411.

In the N-terminal section; belongs to the precorrin-2 dehydrogenase / sirohydrochlorin ferrochelatase family. This sequence in the C-terminal section; belongs to the precorrin methyltransferase family.

The enzyme catalyses uroporphyrinogen III + 2 S-adenosyl-L-methionine = precorrin-2 + 2 S-adenosyl-L-homocysteine + H(+). It catalyses the reaction precorrin-2 + NAD(+) = sirohydrochlorin + NADH + 2 H(+). The catalysed reaction is siroheme + 2 H(+) = sirohydrochlorin + Fe(2+). The protein operates within cofactor biosynthesis; adenosylcobalamin biosynthesis; precorrin-2 from uroporphyrinogen III: step 1/1. It participates in cofactor biosynthesis; adenosylcobalamin biosynthesis; sirohydrochlorin from precorrin-2: step 1/1. It functions in the pathway porphyrin-containing compound metabolism; siroheme biosynthesis; precorrin-2 from uroporphyrinogen III: step 1/1. Its pathway is porphyrin-containing compound metabolism; siroheme biosynthesis; siroheme from sirohydrochlorin: step 1/1. The protein operates within porphyrin-containing compound metabolism; siroheme biosynthesis; sirohydrochlorin from precorrin-2: step 1/1. Functionally, multifunctional enzyme that catalyzes the SAM-dependent methylations of uroporphyrinogen III at position C-2 and C-7 to form precorrin-2 via precorrin-1. Then it catalyzes the NAD-dependent ring dehydrogenation of precorrin-2 to yield sirohydrochlorin. Finally, it catalyzes the ferrochelation of sirohydrochlorin to yield siroheme. This Salmonella arizonae (strain ATCC BAA-731 / CDC346-86 / RSK2980) protein is Siroheme synthase.